Here is a 283-residue protein sequence, read N- to C-terminus: Pantothenate synthetase (283 aa).

30 to 37 (MGYLHDGH) lines the ATP pocket. His37 functions as the Proton donor in the catalytic mechanism. Position 61 (Gln61) interacts with (R)-pantoate. Gln61 lines the beta-alanine pocket. Position 148-151 (148-151 (GQKD)) interacts with ATP. Residue Gln154 coordinates (R)-pantoate. 185–188 (MSSR) serves as a coordination point for ATP.

The protein belongs to the pantothenate synthetase family. Homodimer.

Its subcellular location is the cytoplasm. The enzyme catalyses (R)-pantoate + beta-alanine + ATP = (R)-pantothenate + AMP + diphosphate + H(+). It functions in the pathway cofactor biosynthesis; (R)-pantothenate biosynthesis; (R)-pantothenate from (R)-pantoate and beta-alanine: step 1/1. Its function is as follows. Catalyzes the condensation of pantoate with beta-alanine in an ATP-dependent reaction via a pantoyl-adenylate intermediate. The polypeptide is Pantothenate synthetase (Carboxydothermus hydrogenoformans (strain ATCC BAA-161 / DSM 6008 / Z-2901)).